The chain runs to 393 residues: MATAQLQRTSMSALIFPNKISTEQQSLVLVKRLLAVSVSCITYLRGIFPECAYGTRYLDDLCVKILREDKNCPGSTQLVKWMLGCYDALHKKYLRMVVLAVYTNPEDPQTISECYQFKFKYTSNGPVMDFTSKNQSNEPNMSSADTKKASILLIRKIYILMQNLGPLPNDVCLTMKLFYYDEVTPPDYQPPGFKDGDCEGVIFEGEPMYLNVGEVPTPFHTFKVKVTTERERMENIGSGILSPKQLKTPLQKILTDKDDLEDDQEHYISDEFDTETKMEEQEKNPGCSVRREAGFICEEDEMKSKGSPDFSISHSQVEQLVSKTSELDVSESKTRSGKIFQNKMANGNQQVKSKENRKRTQLESGKTVLHPFDSSSQESVPKRRKFSEPKERI.

The 203-residue stretch at 24 to 226 folds into the HORMA domain; the sequence is QQSLVLVKRL…TPFHTFKVKV (203 aa). The disordered stretch occupies residues 322 to 393; sequence SKTSELDVSE…RKFSEPKERI (72 aa). Residues 352-361 show a composition bias toward basic and acidic residues; it reads KSKENRKRTQ. At Ser375 the chain carries Phosphoserine. The Nuclear localization signal motif lies at 382 to 385; that stretch reads KRRK.

As to quaternary structure, interacts with HORMAD2. Interacts with IHO1. Phosphorylated at Ser-376 in a SPO11-dependent manner.

The protein resides in the nucleus. Its subcellular location is the chromosome. Functionally, plays a key role in meiotic progression. Regulates 3 different functions during meiosis: ensures that sufficient numbers of processed DNA double-strand breaks (DSBs) are available for successful homology search by increasing the steady-state numbers of single-stranded DSB ends. Promotes synaptonemal-complex formation independently of its role in homology search. Plays a key role in the male mid-pachytene checkpoint and the female meiotic prophase checkpoint: required for efficient build-up of ATR activity on unsynapsed chromosome regions, a process believed to form the basis of meiotic silencing of unsynapsed chromatin (MSUC) and meiotic prophase quality control in both sexes. The sequence is that of HORMA domain-containing protein 1 (HORMAD1) from Bos taurus (Bovine).